A 553-amino-acid polypeptide reads, in one-letter code: Sulfatase (553 aa).

The first 25 residues, 1 to 25, serve as a signal peptide directing secretion; that stretch reads MTSEMKKFSKIVLFGLLISPLLASS. Ca(2+)-binding residues include D43, D44, and C88. C88 (nucleophile) is an active-site residue. At C88 the chain carries 3-oxoalanine (Cys). H159 is a catalytic residue. Ca(2+)-binding residues include D350 and N351.

The protein belongs to the sulfatase family. Requires Ca(2+) as cofactor. Post-translationally, the conversion to 3-oxoalanine (also known as C-formylglycine, FGly), of a serine or cysteine residue in prokaryotes and of a cysteine residue in eukaryotes, is critical for catalytic activity. This post-translational modification is severely defective in multiple sulfatase deficiency (MSD).

Its subcellular location is the secreted. Sulfatase that may be involved in ulvan degradation. Ulvan is the main polysaccharide component of the Ulvales (green seaweed) cell wall. It is composed of disaccharide building blocks comprising 3-sulfated rhamnose (Rha3S) linked to D-glucuronic acid (GlcA), L-iduronic acid (IduA), or D-xylose (Xyl). The polypeptide is Sulfatase (Formosa agariphila (strain DSM 15362 / KCTC 12365 / LMG 23005 / KMM 3901 / M-2Alg 35-1)).